A 1235-amino-acid polypeptide reads, in one-letter code: DNA polymerase catalytic subunit (1235 aa).

Disordered regions lie at residues 640–692 (QGRF…TAGR) and 1098–1134 (ATAP…ASKP). Residues 650-661 (APKRPAAAREDE) show a composition bias toward basic and acidic residues. A compositionally biased stretch (acidic residues) spans 662–675 (ERPEEEGEDEDERE). Residues 676 to 691 (EGGGEREPEGARETAG) are compositionally biased toward basic and acidic residues.

This sequence belongs to the DNA polymerase type-B family. Forms a complex with the ssDNA-binding protein UL29, the DNA polymerase processivity factor, and the alkaline exonuclease. Interacts with the putative helicase-primase complex subunit UL8; this interaction may coordinate leading and lagging strand DNA synthesis at the replication fork.

It localises to the host nucleus. It catalyses the reaction DNA(n) + a 2'-deoxyribonucleoside 5'-triphosphate = DNA(n+1) + diphosphate. It carries out the reaction Endonucleolytic cleavage to 5'-phosphomonoester.. Its function is as follows. Replicates viral genomic DNA. The replication complex is composed of six viral proteins: the DNA polymerase, processivity factor, primase, primase-associated factor, helicase, and ssDNA-binding protein. Additionally, the polymerase contains an intrinsic ribonuclease H (RNase H) activity that specifically degrades RNA/DNA heteroduplexes or duplex DNA substrates in the 5' to 3' direction. Therefore, it can catalyze the excision of the RNA primers that initiate the synthesis of Okazaki fragments at a replication fork during viral DNA replication. This Human herpesvirus 1 (strain Angelotti) (HHV-1) protein is DNA polymerase catalytic subunit.